The primary structure comprises 310 residues: Vomeronasal type-1 receptor 101 (310 aa).

Topologically, residues 1–19 (MNKVNILPSDTNMKITLFS) are extracellular. The helical transmembrane segment at 20 to 40 (ELSVGISANSILFFAHLCMFF) threads the bilayer. Over 41 to 49 (EENRSKPID) the chain is Cytoplasmic. The chain crosses the membrane as a helical span at residues 50–70 (LCIAFLSLTQLMLLVTMGLIA). The Extracellular segment spans residues 71-93 (ADMFMAQGIWDITTCRSLIYFHR). The cysteines at positions 85 and 172 are disulfide-linked. The helical transmembrane segment at 94–114 (LLRGFNLCAACLLHILWTFTL) threads the bilayer. Residues 115 to 134 (SPRSSCLTKFKHKSPHHISG) lie on the Cytoplasmic side of the membrane. A helical membrane pass occupies residues 135 to 155 (AYLFFCVLYMSFSSHLFVLVI). Residues 156–193 (ATSNLTSDHFMYVTQSCSLLPMSYSRTSTFSLLMVTRE) are Extracellular-facing. Asn-159 is a glycosylation site (N-linked (GlcNAc...) asparagine). A helical membrane pass occupies residues 194–214 (VFLISLMALSSGYMVTLLWRH). The Cytoplasmic segment spans residues 215–238 (KKQAQHLHSTRLSSKASPQQRATR). Residues 239–259 (TILLLMTFFVVFYILGTVIFH) traverse the membrane as a helical segment. The Extracellular segment spans residues 260–268 (SRTKFKDGS). The helical transmembrane segment at 269 to 289 (IFYCVQIIVSHSYATISPFVF) threads the bilayer. At 290–310 (VFSEKRIIKFFRSMCGRIVNT) the chain is on the cytoplasmic side.

The protein belongs to the G-protein coupled receptor 1 family. As to expression, expressed in 1-4% of neurons of the vomeronasal organ. Only one pheromone receptor gene may be expressed in a particular neuron. Not expressed in the main olfactory epithelium.

The protein localises to the cell membrane. In terms of biological role, putative pheromone receptor implicated in the regulation of social as well as reproductive behavior. This is Vomeronasal type-1 receptor 101 (Vom1r101) from Rattus norvegicus (Rat).